The following is a 1017-amino-acid chain: EMILIN-1 (1017 aa).

A signal peptide spans 1–21 (MAPRALWSCYLCCLLTIATEA). Residues 56 to 133 (HRNWCAYVVT…QGYGGDDCGE (78 aa)) enclose the EMI domain. Intrachain disulfides connect Cys60–Cys123, Cys87–Cys94, and Cys122–Cys131. 2 disordered regions span residues 134 to 180 (GPAS…SEKV) and 259 to 289 (ELGH…GPSE). The segment covering 154-167 (RPNLSGSSAGSHLS) has biased composition (low complexity). N-linked (GlcNAc...) asparagine glycosylation is present at Asn156. 3 coiled-coil regions span residues 171–211 (GEGP…LAED), 237–266 (ETLS…LNNH), and 310–374 (LDGF…DVVT). Residues 383–403 (RRGSELGGAAGQGGHPPGYTS) are disordered. The span at 387–398 (ELGGAAGQGGHP) shows a compositional bias: gly residues. N-linked (GlcNAc...) asparagine glycosylation is found at Asn416, Asn456, Asn562, and Asn659. The stretch at 519 to 573 (LHEAEAAGEAQQAVLEGLQGLLSRLRERMDAQEETAAEILLRLNLTAAQLSQLEG) forms a coiled coil. The stretch at 676–697 (LADLGATKDSIISEINRLQQEA) forms a coiled coil. N-linked (GlcNAc...) asparagine glycosylation is found at Asn767 and Asn795. Residues 789 to 809 (RRLGALNNSLLLLEDRLQQLS) adopt a coiled-coil conformation. Low complexity predominate over residues 811-820 (KDFTGPSGKA). The interval 811-866 (KDFTGPSGKAGPPGPPGLQGPSGPAGPPGPPGKDGQQGAIGPPGPQGEQGAEGAPA) is disordered. In terms of domain architecture, Collagen-like spans 815-865 (GPSGKAGPPGPPGLQGPSGPAGPPGPPGKDGQQGAIGPPGPQGEQGAEGAP). The span at 822–841 (PPGPPGLQGPSGPAGPPGPP) shows a compositional bias: pro residues. Residues 843-866 (KDGQQGAIGPPGPQGEQGAEGAPA) show a composition bias toward low complexity. Residues 867-1014 (APVPRVAFSA…GALLYEDTEL (148 aa)) enclose the C1q domain.

Homotrimer associated through a moderately stable interaction of the C-terminal globular C1q domains, allowing the nucleation of the triple helix and then a further quaternary assembly to higher-order polymers via intermolecular disulfide bonds. Interacts with EMILIN2. Interacts with EFEMP2; this interaction promotes the incorporation of EFEMP2 into the extracellular matrix.

It is found in the secreted. It localises to the extracellular space. The protein localises to the extracellular matrix. Functionally, involved in elastic and collagen fibers formation. It is required for EFEMP2 deposition into the extracellular matrix, and collagen network assembly and cross-linking via protein-lysine 6-oxidase/LOX activity. May be responsible for anchoring smooth muscle cells to elastic fibers, and may be involved the processes that regulate vessel assembly. Has cell adhesive capacity. May have a function in placenta formation and initial organogenesis and a later role in interstitial connective tissue. The sequence is that of EMILIN-1 (Emilin1) from Mus musculus (Mouse).